A 602-amino-acid chain; its full sequence is Glutamine--fructose-6-phosphate aminotransferase [isomerizing] (602 aa).

Cys-2 (nucleophile; for GATase activity) is an active-site residue. One can recognise a Glutamine amidotransferase type-2 domain in the interval 2 to 217; the sequence is CGIVGVVGNT…DQELVIVKAD (216 aa). The disordered stretch occupies residues 67 to 87; that stretch reads IGHTRWATHGKPTEDNAHPHR. The segment covering 77–87 has biased composition (basic and acidic residues); that stretch reads KPTEDNAHPHR. SIS domains follow at residues 283–422 and 455–592; these read IIKA…ANGN and VREL…VDKP. Lys-597 serves as the catalytic For Fru-6P isomerization activity.

Homodimer.

It localises to the cytoplasm. It carries out the reaction D-fructose 6-phosphate + L-glutamine = D-glucosamine 6-phosphate + L-glutamate. Functionally, catalyzes the first step in hexosamine metabolism, converting fructose-6P into glucosamine-6P using glutamine as a nitrogen source. The chain is Glutamine--fructose-6-phosphate aminotransferase [isomerizing] from Streptococcus pneumoniae serotype 4 (strain ATCC BAA-334 / TIGR4).